Here is a 249-residue protein sequence, read N- to C-terminus: MRKKLVAGNWKMHGSLQQNAALLELIKAGVSSLPCEVAVCPPYPYLGQVQSILSGSALAWGAQSVSEHQSGAFTGEVAASMLLEFGCRYVLVGHSERRALYGETDTVVSAKFEAVQRAGLVPVLCVGETLAERESGMTSVVVARQLSAVLGRVGVAAMASAVVAYEPVWAIGTGVTASPAQAQEVHAAIRAKVAELDLGVANGLRILYGGSVKPQNAMELFGQDDIDGGLIGGAALVADDFLAICRAAN.

9–11 (NWK) is a substrate binding site. His94 acts as the Electrophile in catalysis. Glu166 acts as the Proton acceptor in catalysis. Residues Gly172, Ser211, and 232-233 (GG) contribute to the substrate site.

Belongs to the triosephosphate isomerase family. Homodimer.

Its subcellular location is the cytoplasm. The catalysed reaction is D-glyceraldehyde 3-phosphate = dihydroxyacetone phosphate. It participates in carbohydrate biosynthesis; gluconeogenesis. The protein operates within carbohydrate degradation; glycolysis; D-glyceraldehyde 3-phosphate from glycerone phosphate: step 1/1. Involved in the gluconeogenesis. Catalyzes stereospecifically the conversion of dihydroxyacetone phosphate (DHAP) to D-glyceraldehyde-3-phosphate (G3P). In Dechloromonas aromatica (strain RCB), this protein is Triosephosphate isomerase.